We begin with the raw amino-acid sequence, 898 residues long: Aconitate hydratase 1 (898 aa).

Residue Ala-2 is modified to N-acetylalanine. Substrate contacts are provided by residues Gln-90 and 209–211 (DSH). Residues Cys-441, Cys-507, and Cys-510 each contribute to the [4Fe-4S] cluster site. Substrate contacts are provided by residues Arg-540, Arg-545, Arg-703, and 784 to 785 (SR).

The protein belongs to the aconitase/IPM isomerase family. Monomer. Requires [4Fe-4S] cluster as cofactor. Mostly expressed in roots, stems and leaves, also present in stems and flowers.

The protein resides in the cytoplasm. It localises to the mitochondrion. The catalysed reaction is citrate = D-threo-isocitrate. It participates in carbohydrate metabolism; tricarboxylic acid cycle; isocitrate from oxaloacetate: step 2/2. Its function is as follows. Catalyzes the isomerization of citrate to isocitrate via cis-aconitate. Contributes to oxidative stress tolerance. May have a role in respiration. The protein is Aconitate hydratase 1 of Arabidopsis thaliana (Mouse-ear cress).